The primary structure comprises 229 residues: Flagellar L-ring protein (229 aa).

An N-terminal signal peptide occupies residues 1–25 (MKQVRLLPSATVRAACAVAVAALAG). Residue cysteine 26 is the site of N-palmitoyl cysteine attachment. A lipid anchor (S-diacylglycerol cysteine) is attached at cysteine 26.

This sequence belongs to the FlgH family. The basal body constitutes a major portion of the flagellar organelle and consists of four rings (L,P,S, and M) mounted on a central rod.

The protein resides in the cell outer membrane. The protein localises to the bacterial flagellum basal body. Assembles around the rod to form the L-ring and probably protects the motor/basal body from shearing forces during rotation. The chain is Flagellar L-ring protein from Burkholderia vietnamiensis (strain G4 / LMG 22486) (Burkholderia cepacia (strain R1808)).